The following is a 60-amino-acid chain: MANKLEITLTKSVIGTKPAQRKTVEALGLRKLHQTVEKADNAATRGMLDKVAHLVTVKEI.

This sequence belongs to the universal ribosomal protein uL30 family. In terms of assembly, part of the 50S ribosomal subunit.

The protein is Large ribosomal subunit protein uL30 of Lysinibacillus sphaericus (strain C3-41).